The chain runs to 236 residues: Small ribosomal subunit protein uS3 (236 aa).

A KH type-2 domain is found at 39–107 (IREILHKELK…DVVINIVEIR (69 aa)). The tract at residues 213 to 236 (MAQDKRMNEGGGESPSPRSRRDAA) is disordered.

This sequence belongs to the universal ribosomal protein uS3 family. In terms of assembly, part of the 30S ribosomal subunit. Forms a tight complex with proteins S10 and S14.

Binds the lower part of the 30S subunit head. Binds mRNA in the 70S ribosome, positioning it for translation. This Bradyrhizobium sp. (strain ORS 278) protein is Small ribosomal subunit protein uS3.